The sequence spans 165 residues: Lithostathine-1 (165 aa).

The signal sequence occupies residues 1-21 (MARNAYFILLSCLIVLSPSQG). Position 22 is a pyrrolidone carboxylic acid (Gln-22). In terms of domain architecture, C-type lectin spans 33 to 163 (ISCPEGSNAY…DAQYSFVCKF (131 aa)). 3 disulfide bridges follow: Cys-35/Cys-46, Cys-63/Cys-161, and Cys-136/Cys-153. Asn-129 carries N-linked (GlcNAc...) asparagine glycosylation.

As to expression, expressed only in regenerating islets and normal exocrine pancreas, but not in normal pancreatic islets. Expressed strongly in pancreas, moderately in gall bladder, and weakly in liver.

The protein localises to the secreted. Might act as an inhibitor of spontaneous calcium carbonate precipitation. The polypeptide is Lithostathine-1 (Reg1) (Mus musculus (Mouse)).